The following is a 187-amino-acid chain: Putative type I specificity subunit S.MpnORF289P N-terminus (187 aa).

This sequence belongs to the type-I restriction system S methylase family. As to quaternary structure, the methyltransferase is composed of M and S polypeptides.

Functionally, the N-terminal section of a specificity (S) subunit of a type I methyltransferase (MTase); this subunit dictates DNA sequence specificity. The single R subunit has multiple frameshifts and is probably not expressed. This is Putative type I specificity subunit S.MpnORF289P N-terminus from Mycoplasma pneumoniae (strain ATCC 29342 / M129 / Subtype 1) (Mycoplasmoides pneumoniae).